Consider the following 429-residue polypeptide: Ribosomal RNA small subunit methyltransferase B (429 aa).

S-adenosyl-L-methionine is bound by residues 254-260 (CAAPGGK), aspartate 277, aspartate 303, and aspartate 322. Cysteine 375 serves as the catalytic Nucleophile.

This sequence belongs to the class I-like SAM-binding methyltransferase superfamily. RsmB/NOP family.

It localises to the cytoplasm. It carries out the reaction cytidine(967) in 16S rRNA + S-adenosyl-L-methionine = 5-methylcytidine(967) in 16S rRNA + S-adenosyl-L-homocysteine + H(+). Its function is as follows. Specifically methylates the cytosine at position 967 (m5C967) of 16S rRNA. The protein is Ribosomal RNA small subunit methyltransferase B of Yersinia enterocolitica serotype O:8 / biotype 1B (strain NCTC 13174 / 8081).